A 360-amino-acid chain; its full sequence is DNA polymerase IV (360 aa).

In terms of domain architecture, UmuC spans 8-189 (IIHVDMDCFF…LPLEKIPGVG (182 aa)). Mg(2+)-binding residues include Asp12 and Asp107. The active site involves Glu108.

It belongs to the DNA polymerase type-Y family. Monomer. Requires Mg(2+) as cofactor.

It is found in the cytoplasm. The catalysed reaction is DNA(n) + a 2'-deoxyribonucleoside 5'-triphosphate = DNA(n+1) + diphosphate. Its function is as follows. Poorly processive, error-prone DNA polymerase involved in untargeted mutagenesis. Copies undamaged DNA at stalled replication forks, which arise in vivo from mismatched or misaligned primer ends. These misaligned primers can be extended by PolIV. Exhibits no 3'-5' exonuclease (proofreading) activity. May be involved in translesional synthesis, in conjunction with the beta clamp from PolIII. This is DNA polymerase IV from Vibrio cholerae serotype O1 (strain ATCC 39315 / El Tor Inaba N16961).